Consider the following 304-residue polypeptide: Quinolinate synthase (304 aa).

The iminosuccinate site is built by histidine 23 and serine 40. Position 86 (cysteine 86) interacts with [4Fe-4S] cluster. Iminosuccinate contacts are provided by residues 112 to 114 and serine 129; that span reads YVN. [4Fe-4S] cluster is bound at residue cysteine 173. Residues 199–201 and threonine 216 each bind iminosuccinate; that span reads HPE. Residue cysteine 260 coordinates [4Fe-4S] cluster.

The protein belongs to the quinolinate synthase family. Type 2 subfamily. It depends on [4Fe-4S] cluster as a cofactor.

The protein resides in the cytoplasm. It catalyses the reaction iminosuccinate + dihydroxyacetone phosphate = quinolinate + phosphate + 2 H2O + H(+). Its pathway is cofactor biosynthesis; NAD(+) biosynthesis; quinolinate from iminoaspartate: step 1/1. Catalyzes the condensation of iminoaspartate with dihydroxyacetone phosphate to form quinolinate. This Methanothermobacter thermautotrophicus (strain ATCC 29096 / DSM 1053 / JCM 10044 / NBRC 100330 / Delta H) (Methanobacterium thermoautotrophicum) protein is Quinolinate synthase.